A 176-amino-acid polypeptide reads, in one-letter code: Xanthine-guanine phosphoribosyltransferase (176 aa).

5-phospho-alpha-D-ribose 1-diphosphate-binding positions include 51–52, arginine 88, and 111–119; these read RG and DDLVDSGKT. Residue arginine 88 participates in GMP binding. Aspartate 112 provides a ligand contact to Mg(2+). Guanine-binding residues include aspartate 115 and isoleucine 158. 2 residues coordinate xanthine: aspartate 115 and isoleucine 158. Residues 115–119 and 157–158 contribute to the GMP site; these read DSGKT and WI.

The protein belongs to the purine/pyrimidine phosphoribosyltransferase family. XGPT subfamily. In terms of assembly, homotetramer. The cofactor is Mg(2+).

It is found in the cell inner membrane. The enzyme catalyses GMP + diphosphate = guanine + 5-phospho-alpha-D-ribose 1-diphosphate. It catalyses the reaction XMP + diphosphate = xanthine + 5-phospho-alpha-D-ribose 1-diphosphate. It carries out the reaction IMP + diphosphate = hypoxanthine + 5-phospho-alpha-D-ribose 1-diphosphate. The protein operates within purine metabolism; GMP biosynthesis via salvage pathway; GMP from guanine: step 1/1. It participates in purine metabolism; XMP biosynthesis via salvage pathway; XMP from xanthine: step 1/1. Its function is as follows. Purine salvage pathway enzyme that catalyzes the transfer of the ribosyl-5-phosphate group from 5-phospho-alpha-D-ribose 1-diphosphate (PRPP) to the N9 position of the 6-oxopurines guanine and xanthine to form the corresponding ribonucleotides GMP (guanosine 5'-monophosphate) and XMP (xanthosine 5'-monophosphate), with the release of PPi. To a lesser extent, also acts on hypoxanthine. In Roseobacter denitrificans (strain ATCC 33942 / OCh 114) (Erythrobacter sp. (strain OCh 114)), this protein is Xanthine-guanine phosphoribosyltransferase.